The primary structure comprises 346 residues: NADH-ubiquinone oxidoreductase chain 2 (346 aa).

The next 11 helical transmembrane spans lie at 1–21 (MSPY…MLIS), 26–46 (WVFM…ILVW), 60–80 (FIVQ…SLSG), 96–116 (MMIM…YWVV), 122–142 (LNYI…LAVL), 151–171 (SSML…GGLG), 178–198 (LLAF…VAGS), 199–219 (LLGL…FSIL), 242–262 (VLLG…GFFG), 274–294 (LLLG…FYYL), and 320–340 (LSGL…LVGG).

Belongs to the complex I subunit 2 family.

The protein resides in the mitochondrion inner membrane. The enzyme catalyses a ubiquinone + NADH + 5 H(+)(in) = a ubiquinol + NAD(+) + 4 H(+)(out). Functionally, core subunit of the mitochondrial membrane respiratory chain NADH dehydrogenase (Complex I) that is believed to belong to the minimal assembly required for catalysis. Complex I functions in the transfer of electrons from NADH to the respiratory chain. The immediate electron acceptor for the enzyme is believed to be ubiquinone. The chain is NADH-ubiquinone oxidoreductase chain 2 (ND2) from Branchiostoma lanceolatum (Common lancelet).